The chain runs to 785 residues: Endonuclease MutS2 (785 aa).

Residue 335 to 342 (GPNTGGKT) coordinates ATP. In terms of domain architecture, Smr spans 710–785 (LDLRGERYEN…GSGVTIVELK (76 aa)).

This sequence belongs to the DNA mismatch repair MutS family. MutS2 subfamily. Homodimer. Binds to stalled ribosomes, contacting rRNA.

Its function is as follows. Endonuclease that is involved in the suppression of homologous recombination and thus may have a key role in the control of bacterial genetic diversity. Acts as a ribosome collision sensor, splitting the ribosome into its 2 subunits. Detects stalled/collided 70S ribosomes which it binds and splits by an ATP-hydrolysis driven conformational change. Acts upstream of the ribosome quality control system (RQC), a ribosome-associated complex that mediates the extraction of incompletely synthesized nascent chains from stalled ribosomes and their subsequent degradation. Probably generates substrates for RQC. This Bacillus velezensis (strain DSM 23117 / BGSC 10A6 / LMG 26770 / FZB42) (Bacillus amyloliquefaciens subsp. plantarum) protein is Endonuclease MutS2.